The sequence spans 692 residues: MADRKTPLHMVRNIGIAAHIDAGKTTTSERILFFTGMSHKIGEVHDGAATMDWMEQEKERGITITSAATTCFWKQHQINLIDTPGHVDFTIEVERSMRVLDGAVAVFCSVGGVQPQSETVWRQANKYHVPRIVFVNKMDRIGANFYNVESQIRNRLKANPVPIQIPIGAEDDFKGVIDLVRMKAYVWEDDKKPTDYVEKEIPAELLEKAQEYRAKLIEAVSETDDSLMEKFFSGEELSEEEIKKGIKAGCLRMSIIPMLCGTAFKNKGIQPLLNAVVDYLPAPDEIEAIKGVYEDGTEVTVESTDDGEFAALAFKIMTDPFVGQLTFIRVYRGSLESGSYAYNTVQDSKERIGRLLKMHSNKREEISVLHAGEIGAVVGLKNTLTGDTLASEKDKVILEKMDFPEPVISVAVEPKTKADQEKMAIALQKLAQEDPSFRVNTDEESGQTIISGMGELHLEIIVDRMLREFKVDAEVGQPQVAYRETIRKPVEQEYKYAKQSGGRGQYGHVFLRIEPLEPASGFEFVNDIKGGVVPKEYIPAVEKGCREALQNGVLAGYPVEDVKVTLYDGSYHEVDSSEMAFKLAASMGFKEGARKANPVILEPMMKVEVETPEEYMGDVIGDLNKRRGQVSSMDERNGSKIITAFCPLAQMFGYSTDLRSGTQGRATYSMEFDHYEEVPKNVSEEIIKKRNG.

The tr-type G domain occupies 9 to 284; sequence HMVRNIGIAA…AVVDYLPAPD (276 aa). GTP contacts are provided by residues 18-25, 82-86, and 136-139; these read AHIDAGKT, DTPGH, and NKMD.

It belongs to the TRAFAC class translation factor GTPase superfamily. Classic translation factor GTPase family. EF-G/EF-2 subfamily.

It localises to the cytoplasm. Functionally, catalyzes the GTP-dependent ribosomal translocation step during translation elongation. During this step, the ribosome changes from the pre-translocational (PRE) to the post-translocational (POST) state as the newly formed A-site-bound peptidyl-tRNA and P-site-bound deacylated tRNA move to the P and E sites, respectively. Catalyzes the coordinated movement of the two tRNA molecules, the mRNA and conformational changes in the ribosome. This Campylobacter curvus (strain 525.92) protein is Elongation factor G.